The chain runs to 473 residues: MTVRTRFAPSPTGELHLGSIRTALYSWLFARKNNGEFILRIEDTDEERIKKISINNIIETMKLLGLNWDHGPYFQTKKLEKYNIIAKEMIYSGIAYKCYCSKNRINNLRIMQINKGEKPKYDGFCRNIEEKNIKNKRFVVRFSNPKNGYVIFNDLIRGTLKFKNSELDDLIILRSNKIPTYNFCSVIDDHDMNISHVIRGEDHINNTPRQINIFKALKIKCPKYAHISMILDKDRKKLSKKNQSTDVMKYIKNGFLPEALLNYLVRLGWSYGNQEIFNIDEMKKLFNLKSVGKSSCIFDINKLLWINQYYIQKLSDYDISSQIKKFFNKKEIDFNQGPKIENLIKIFKKKSRTLKEIFNQILFFYEDFSKVNFDLIKKYFTIDTNVHLKIFCKKLEKTSLWSVEEIKNTFFCTIKELNFNIKKIAMPIRIILSGSEHSPSIYSIIYSCGKLQTIKKIKIAIKFINDNKKKLNL.

A 'HIGH' region motif is present at residues 9-19 (PSPTGELHLGS). Positions 237–241 (KLSKK) match the 'KMSKS' region motif. K240 contributes to the ATP binding site.

Belongs to the class-I aminoacyl-tRNA synthetase family. Glutamate--tRNA ligase type 1 subfamily. Monomer.

The protein resides in the cytoplasm. The enzyme catalyses tRNA(Glu) + L-glutamate + ATP = L-glutamyl-tRNA(Glu) + AMP + diphosphate. Functionally, catalyzes the attachment of glutamate to tRNA(Glu) in a two-step reaction: glutamate is first activated by ATP to form Glu-AMP and then transferred to the acceptor end of tRNA(Glu). The protein is Glutamate--tRNA ligase of Wigglesworthia glossinidia brevipalpis.